Consider the following 86-residue polypeptide: Small ribosomal subunit protein uS17 (86 aa).

It belongs to the universal ribosomal protein uS17 family. As to quaternary structure, part of the 30S ribosomal subunit.

Its function is as follows. One of the primary rRNA binding proteins, it binds specifically to the 5'-end of 16S ribosomal RNA. This chain is Small ribosomal subunit protein uS17, found in Streptococcus equi subsp. equi (strain 4047).